We begin with the raw amino-acid sequence, 71 residues long: MPVVKVRENEPFDVALRRFKRSCEKAGILSEVRRREHYEKPTTVRKRAKAAAQKRHAKKLSRENARRVRLY.

The interval 38 to 71 is disordered; sequence YEKPTTVRKRAKAAAQKRHAKKLSRENARRVRLY. Residues 43–59 show a composition bias toward basic residues; sequence TVRKRAKAAAQKRHAKK. Basic and acidic residues predominate over residues 60 to 71; that stretch reads LSRENARRVRLY.

This sequence belongs to the bacterial ribosomal protein bS21 family.

The sequence is that of Small ribosomal subunit protein bS21 from Aliivibrio fischeri (strain ATCC 700601 / ES114) (Vibrio fischeri).